The following is a 195-amino-acid chain: Calcineurin B homologous protein 1 (195 aa).

G2 carries N-myristoyl glycine lipidation. 4 EF-hand domains span residues 26–61 (SQIT…AINP), 66–101 (IINA…KSKD), 110–145 (SRSN…MVGV), and 151–186 (QLGS…VDVE). Ca(2+) contacts are provided by D123, D125, D127, K129, E134, D164, D166, D168, and E175.

It belongs to the calcineurin regulatory subunit family. CHP subfamily. In terms of assembly, monomer. Phosphorylated. In terms of processing, calcium-binding or N-myristoylation are necessary for the Na(+)/H(+) exchange activities.

Its subcellular location is the nucleus. It localises to the cytoplasm. It is found in the cytoskeleton. The protein localises to the endomembrane system. The protein resides in the endoplasmic reticulum-Golgi intermediate compartment. Its subcellular location is the endoplasmic reticulum. It localises to the cell membrane. It is found in the membrane. Its function is as follows. Calcium-binding protein involved in different processes such as regulation of vesicular trafficking, plasma membrane Na(+)/H(+) exchanger and gene transcription. Involved in the constitutive exocytic membrane traffic. Mediates the association between microtubules and membrane-bound organelles of the endoplasmic reticulum and Golgi apparatus and is also required for the targeting and fusion of transcytotic vesicles (TCV) with the plasma membrane. Functions as an integral cofactor in cell pH regulation by controlling plasma membrane-type Na(+)/H(+) exchange activity. Inhibits serum- and GTPase-stimulated Na(+)/H(+) exchange. Plays a role as an inhibitor of ribosomal RNA transcription. Acts as a negative regulator of the calcineurin/NFAT signaling pathway. This chain is Calcineurin B homologous protein 1 (CHP1), found in Gallus gallus (Chicken).